A 178-amino-acid chain; its full sequence is Large ribosomal subunit protein uL6 (178 aa).

The protein belongs to the universal ribosomal protein uL6 family. In terms of assembly, part of the 50S ribosomal subunit.

In terms of biological role, this protein binds to the 23S rRNA, and is important in its secondary structure. It is located near the subunit interface in the base of the L7/L12 stalk, and near the tRNA binding site of the peptidyltransferase center. In Streptococcus agalactiae serotype Ia (strain ATCC 27591 / A909 / CDC SS700), this protein is Large ribosomal subunit protein uL6.